A 1249-amino-acid polypeptide reads, in one-letter code: Pleckstrin homology-like domain family B member 2 (1249 aa).

Disordered regions lie at residues 64–85 (QPVS…SPSL) and 128–154 (DHYT…SSRN). Phosphoserine is present on residues serine 71 and serine 73. A compositionally biased stretch (polar residues) spans 74–84 (PMGTSVRSSPS). Residues 128-143 (DHYTGRDSERSTRLSE) are compositionally biased toward basic and acidic residues. Serine 156, serine 203, serine 241, and serine 244 each carry phosphoserine. Disordered regions lie at residues 190–248 (SPIS…LSNM) and 264–289 (NQMS…GEKD). A compositionally biased stretch (polar residues) spans 231–248 (ENVSVRTRKYSGSSLSNM). The segment covering 267–283 (SPLSLPPRSSLGNSRRG) has biased composition (low complexity). A phosphoserine mark is found at serine 329, serine 333, serine 347, serine 380, serine 383, serine 389, serine 411, serine 416, serine 465, serine 486, and serine 510. Residues 388 to 424 (DSDLESLRQSSETPQPVLRERKSSISSISGRDDLMDY) form a disordered region. Phosphothreonine is present on residues threonine 546 and threonine 570. Coiled-coil stretches lie at residues 580-692 (TQEL…LDNC) and 718-803 (FEDL…LCNL). The disordered stretch occupies residues 866–934 (VSQPQSSEHF…LGQSNSCGSV (69 aa)). The segment covering 873–888 (EHFRSLEERKKQHKEG) has biased composition (basic and acidic residues). The residue at position 894 (threonine 894) is a Phosphothreonine. Residues 901-919 (TPSLSPHFSSATMGRSTTP) show a composition bias toward polar residues. Residues 1028–1094 (IARIEEMERL…QKLIEKEVKI (67 aa)) adopt a coiled-coil conformation. Residues 1139–1242 (EKTCRGYLIK…WMDVIVTGAE (104 aa)) enclose the PH domain.

Interacts with FLNC. Interacts with AMOTL2; interaction may facilitate PHLDB2 localization to the myotube podosome cortex that surrounds the core. Part of a cortical microtubule stabilization complex (CMSC) composed of KANK1, PPFIA1, PPFIBP1, ERC1/ELKS, PHLDB2/LL5beta, CLASPs, KIF21A and possibly additional interactors; within CMSCs KANK1 and PHLDB2/LL5beta appear to be the core components for targeting of microtubule-binding proteins KIF21A and CLASPs, whereas PPFIA1, PPFIBP1 and ERC1/ELKS serve as scaffolds for protein clustering. As to expression, expressed at postsynaptic membranes of skeletal neuromuscular junctions (at protein level).

It is found in the cytoplasm. The protein localises to the membrane. It localises to the cell projection. The protein resides in the podosome. Its subcellular location is the cell cortex. Its function is as follows. Seems to be involved in the assembly of the postsynaptic apparatus. May play a role in acetyl-choline receptor (AChR) aggregation in the postsynaptic membrane. In Mus musculus (Mouse), this protein is Pleckstrin homology-like domain family B member 2 (Phldb2).